A 475-amino-acid polypeptide reads, in one-letter code: 3-keto-steroid reductase ERG27 (475 aa).

4 residues coordinate NADP(+): isoleucine 32, isoleucine 55, threonine 59, and lysine 65. Catalysis depends on proton donor residues serine 249 and tyrosine 272. Residues tyrosine 272, lysine 276, valine 324, and serine 326 each contribute to the NADP(+) site. Lysine 276 (lowers pKa of active site Tyr) is an active-site residue.

This sequence belongs to the short-chain dehydrogenases/reductases (SDR) family. ERG27 subfamily. As to quaternary structure, heterotetramer of ERG25, ERG26, ERG27 and ERG28. ERG28 acts as a scaffold to tether ERG27 and other 4,4-demethylation-related enzymes, forming a demethylation enzyme complex, in the endoplasmic reticulum.

The protein localises to the endoplasmic reticulum membrane. The protein resides in the lipid droplet. Its pathway is steroid metabolism; ergosterol biosynthesis. 3-keto-steroid reductase; part of the third module of ergosterol biosynthesis pathway that includes the late steps of the pathway. ERG27 is a catalytic component of the C-4 demethylation complex that catalyzes the conversion of 4,4-dimethylfecosterol into fecosterol via 4-methylfecosterol. The third module or late pathway involves the ergosterol synthesis itself through consecutive reactions that mainly occur in the endoplasmic reticulum (ER) membrane. Firstly, the squalene synthase ERG9 catalyzes the condensation of 2 farnesyl pyrophosphate moieties to form squalene, which is the precursor of all steroids. Squalene synthase is crucial for balancing the incorporation of farnesyl diphosphate (FPP) into sterol and nonsterol isoprene synthesis. Secondly, squalene is converted into lanosterol by the consecutive action of the squalene epoxidase ERG1 and the lanosterol synthase ERG7. Then, the delta(24)-sterol C-methyltransferase ERG6 methylates lanosterol at C-24 to produce eburicol. Eburicol is the substrate of the sterol 14-alpha demethylase encoded by CYP51A, CYP51B and CYP51C, to yield 4,4,24-trimethyl ergosta-8,14,24(28)-trienol. CYP51B encodes the enzyme primarily responsible for sterol 14-alpha-demethylation, and plays an essential role in ascospore formation. CYP51A encodes an additional sterol 14-alpha-demethylase, induced on ergosterol depletion and responsible for the intrinsic variation in azole sensitivity. The third CYP51 isoform, CYP51C, does not encode a sterol 14-alpha-demethylase, but is required for full virulence on host wheat ears. The C-14 reductase ERG24 then reduces the C14=C15 double bond which leads to 4,4-dimethylfecosterol. A sequence of further demethylations at C-4, involving the C-4 demethylation complex containing the C-4 methylsterol oxidases ERG25, the sterol-4-alpha-carboxylate 3-dehydrogenase ERG26 and the 3-keto-steroid reductase ERG27, leads to the production of fecosterol via 4-methylfecosterol. ERG28 has a role as a scaffold to help anchor ERG25, ERG26 and ERG27 to the endoplasmic reticulum. The C-8 sterol isomerase ERG2 then catalyzes the reaction which results in unsaturation at C-7 in the B ring of sterols and thus converts fecosterol to episterol. The sterol-C5-desaturases ERG3A and ERG3BB then catalyze the introduction of a C-5 double bond in the B ring to produce 5-dehydroepisterol. The C-22 sterol desaturases ERG5A and ERG5B further convert 5-dehydroepisterol into ergosta-5,7,22,24(28)-tetraen-3beta-ol by forming the C-22(23) double bond in the sterol side chain. Finally, ergosta-5,7,22,24(28)-tetraen-3beta-ol is substrate of the C-24(28) sterol reductase ERG4 to produce ergosterol. The sequence is that of 3-keto-steroid reductase ERG27 from Gibberella zeae (strain ATCC MYA-4620 / CBS 123657 / FGSC 9075 / NRRL 31084 / PH-1) (Wheat head blight fungus).